The chain runs to 612 residues: Chaperone protein DnaK (612 aa).

Phosphothreonine; by autocatalysis is present on Thr173. The segment at 576–612 (AAKAQQAEGGANAEGKKADDNVVDAEYEEVKDDETKK) is disordered. Low complexity predominate over residues 578-588 (KAQQAEGGANA). Residues 596 to 612 (NVVDAEYEEVKDDETKK) are compositionally biased toward acidic residues.

Belongs to the heat shock protein 70 family.

In terms of biological role, acts as a chaperone. In Bacillus velezensis (strain DSM 23117 / BGSC 10A6 / LMG 26770 / FZB42) (Bacillus amyloliquefaciens subsp. plantarum), this protein is Chaperone protein DnaK.